A 172-amino-acid chain; its full sequence is Large ribosomal subunit protein uL10 (172 aa).

The protein belongs to the universal ribosomal protein uL10 family. In terms of assembly, part of the ribosomal stalk of the 50S ribosomal subunit. The N-terminus interacts with L11 and the large rRNA to form the base of the stalk. The C-terminus forms an elongated spine to which L12 dimers bind in a sequential fashion forming a multimeric L10(L12)X complex.

Forms part of the ribosomal stalk, playing a central role in the interaction of the ribosome with GTP-bound translation factors. This Liberibacter africanus subsp. capensis protein is Large ribosomal subunit protein uL10 (rplJ).